The sequence spans 956 residues: DNA polymerase I (956 aa).

The region spanning 209 to 296 is the 5'-3' exonuclease domain; that stretch reads VTVRQWVDYR…VTDLPLDIEF (88 aa).

This sequence belongs to the DNA polymerase type-A family. In terms of assembly, single-chain monomer with multiple functions.

The catalysed reaction is DNA(n) + a 2'-deoxyribonucleoside 5'-triphosphate = DNA(n+1) + diphosphate. In terms of biological role, a DNA polymerase, required for DNA repair after DNA damage induced by ionizing radiation (IR); this is not the major DNA polymerase. Following severe irradiation (7 kGy of gamma irradiation) genomic DNA is fragmented. DNA is progressively degraded for the first 1.5 hours after IR, in a step promoted by RecA and counterbalanced by DNA Pol I and Pol III, followed by massive DNA synthesis and genome reassembly in the next hour. Optimal priming of DNA synthesis requires both RecA and RadA, Pol III initiates DNA synthesis while both Pol I and Pol III are required for its continuation. May also have 5'-3' exonuclease activity. The polypeptide is DNA polymerase I (polA) (Deinococcus radiodurans (strain ATCC 13939 / DSM 20539 / JCM 16871 / CCUG 27074 / LMG 4051 / NBRC 15346 / NCIMB 9279 / VKM B-1422 / R1)).